Reading from the N-terminus, the 329-residue chain is Transcription factor MYB2 (329 aa).

2 consecutive HTH myb-type domains span residues 17 to 69 (GGDL…LNYL) and 70 to 124 (RPDL…QKHA). DNA-binding regions (H-T-H motif) lie at residues 45–69 (WNSLARSAGLKRTGKSCRLRWLNYL) and 97–120 (WSKIAQHLPGRTDNEIKNYWRTRV). 2 stretches are compositionally biased toward low complexity: residues 155–166 (AAAGQQQQQEGG) and 217–235 (LSSTTAGSSSLSTDSGAGA). Disordered regions lie at residues 155-189 (AAAGQQQQQEGGTDTPPLSWQHGGSDGLYESPELP) and 206-242 (GAQSGGTPAPELSSTTAGSSSLSTDSGAGAQPSWPTQ).

Highly expressed in leaves. Expressed in roots and shoots. Expressed at low levels in flowers.

The protein localises to the nucleus. Its function is as follows. Transcription factor involved in abiotic stress responses. Plays a regulatory role in tolerance to salt, cold, and drought stresses. Positively regulates the expression of genes involved in proline synthesis and transport, and genes involved in reactive oxygen species (ROS) scavenging such as peroxidase, superoxide dismutase and catalase during salt stress. Transactivates stress-related genes, including LEA3, RAB16A and DREB2A during salt stress. This is Transcription factor MYB2 from Oryza sativa subsp. japonica (Rice).